The sequence spans 142 residues: Nucleoside diphosphate kinase (142 aa).

Positions 11, 59, 87, 93, 104, and 114 each coordinate ATP. The Pros-phosphohistidine intermediate role is filled by histidine 117.

Belongs to the NDK family. As to quaternary structure, homotetramer. It depends on Mg(2+) as a cofactor.

The protein localises to the cytoplasm. It carries out the reaction a 2'-deoxyribonucleoside 5'-diphosphate + ATP = a 2'-deoxyribonucleoside 5'-triphosphate + ADP. It catalyses the reaction a ribonucleoside 5'-diphosphate + ATP = a ribonucleoside 5'-triphosphate + ADP. Its function is as follows. Major role in the synthesis of nucleoside triphosphates other than ATP. The ATP gamma phosphate is transferred to the NDP beta phosphate via a ping-pong mechanism, using a phosphorylated active-site intermediate. This Pectobacterium atrosepticum (strain SCRI 1043 / ATCC BAA-672) (Erwinia carotovora subsp. atroseptica) protein is Nucleoside diphosphate kinase.